Consider the following 156-residue polypeptide: Ribosome maturation factor RimP (156 aa).

The protein belongs to the RimP family.

It is found in the cytoplasm. Required for maturation of 30S ribosomal subunits. The polypeptide is Ribosome maturation factor RimP (Treponema pallidum (strain Nichols)).